Reading from the N-terminus, the 547-residue chain is Chaperonin GroEL (547 aa).

ATP contacts are provided by residues 30–33 (TLGP), K51, 87–91 (DGTTT), G415, 480–482 (NAA), and D496. Residues 525–547 (KPDDKPAMPPMGGGMGGMGGMDF) are disordered. Gly residues predominate over residues 535–547 (MGGGMGGMGGMDF).

Belongs to the chaperonin (HSP60) family. Forms a cylinder of 14 subunits composed of two heptameric rings stacked back-to-back. Interacts with the co-chaperonin GroES.

It localises to the cytoplasm. The enzyme catalyses ATP + H2O + a folded polypeptide = ADP + phosphate + an unfolded polypeptide.. Its function is as follows. Together with its co-chaperonin GroES, plays an essential role in assisting protein folding. The GroEL-GroES system forms a nano-cage that allows encapsulation of the non-native substrate proteins and provides a physical environment optimized to promote and accelerate protein folding. The sequence is that of Chaperonin GroEL from Novosphingobium aromaticivorans (strain ATCC 700278 / DSM 12444 / CCUG 56034 / CIP 105152 / NBRC 16084 / F199).